The primary structure comprises 592 residues: Methionine--tRNA ligase (592 aa).

The 'HIGH' region motif lies at Pro12–His22. Residues Cys144, Cys147, Cys157, and Cys160 each contribute to the Zn(2+) site. Residues Lys342–Ser346 carry the 'KMSKS' region motif. Position 345 (Thr345) interacts with ATP.

Belongs to the class-I aminoacyl-tRNA synthetase family. MetG type 1 subfamily. Monomer. The cofactor is Zn(2+).

The protein localises to the cytoplasm. The enzyme catalyses tRNA(Met) + L-methionine + ATP = L-methionyl-tRNA(Met) + AMP + diphosphate. Its function is as follows. Is required not only for elongation of protein synthesis but also for the initiation of all mRNA translation through initiator tRNA(fMet) aminoacylation. The chain is Methionine--tRNA ligase from Roseiflexus sp. (strain RS-1).